The chain runs to 506 residues: Probable alpha-L-arabinofuranosidase B (506 aa).

An N-terminal signal peptide occupies residues 1–26 (MSSGLSLERACAVALGIVASASLVAA). The catalytic stretch occupies residues 27–343 (GPCDIYSSGG…ADIVAAKYAI (317 aa)). 3 disulfides stabilise this stretch: cysteine 29-cysteine 39, cysteine 89-cysteine 94, and cysteine 184-cysteine 185. Asparagine 91 is a glycosylation site (N-linked (GlcNAc...) asparagine). Aspartate 227 provides a ligand contact to substrate. Glutamate 229 (nucleophile) is an active-site residue. 2 residues coordinate substrate: asparagine 230 and glycine 304. The active-site Proton donor is the aspartate 305. The tract at residues 344–506 (ASLTSGPALT…VSWVVSTGFA (163 aa)) is ABD. Residues cysteine 409 and cysteine 447 are joined by a disulfide bond. Positions 424, 426, 427, 443, 471, 473, 476, and 496 each coordinate substrate.

This sequence belongs to the glycosyl hydrolase 54 family.

The protein localises to the secreted. The catalysed reaction is Hydrolysis of terminal non-reducing alpha-L-arabinofuranoside residues in alpha-L-arabinosides.. It functions in the pathway glycan metabolism; L-arabinan degradation. Functionally, alpha-L-arabinofuranosidase involved in the degradation of arabinoxylan, a major component of plant hemicellulose. Able to hydrolyze 1,5-, 1,3- and 1,2-alpha-linkages not only in L-arabinofuranosyl oligosaccharides, but also in polysaccharides containing terminal non-reducing L-arabinofuranoses in side chains, like L-arabinan, arabinogalactan and arabinoxylan. The chain is Probable alpha-L-arabinofuranosidase B (abfB) from Aspergillus flavus (strain ATCC 200026 / FGSC A1120 / IAM 13836 / NRRL 3357 / JCM 12722 / SRRC 167).